Consider the following 180-residue polypeptide: UPF0227 protein ECA1814 (180 aa).

The protein belongs to the UPF0227 family.

In Pectobacterium atrosepticum (strain SCRI 1043 / ATCC BAA-672) (Erwinia carotovora subsp. atroseptica), this protein is UPF0227 protein ECA1814.